Here is a 476-residue protein sequence, read N- to C-terminus: Sulfate adenylyltransferase subunit 1 (476 aa).

The 205-residue stretch at 24–228 folds into the tr-type G domain; the sequence is KSLLRFLTCG…MAWYQGPTLL (205 aa). A G1 region spans residues 33–40; it reads GSVDDGKS. GTP is bound at residue 33 to 40; it reads GSVDDGKS. Positions 91–95 are G2; sequence GITID. The G3 stretch occupies residues 112–115; the sequence is DTPG. GTP contacts are provided by residues 112-116 and 167-170; these read DTPGH and NKMD. The segment at 167–170 is G4; that stretch reads NKMD. Residues 205–207 are G5; it reads SAL.

This sequence belongs to the TRAFAC class translation factor GTPase superfamily. Classic translation factor GTPase family. CysN/NodQ subfamily. In terms of assembly, heterodimer composed of CysD, the smaller subunit, and CysN.

The catalysed reaction is sulfate + ATP + H(+) = adenosine 5'-phosphosulfate + diphosphate. Its pathway is sulfur metabolism; hydrogen sulfide biosynthesis; sulfite from sulfate: step 1/3. Functionally, with CysD forms the ATP sulfurylase (ATPS) that catalyzes the adenylation of sulfate producing adenosine 5'-phosphosulfate (APS) and diphosphate, the first enzymatic step in sulfur assimilation pathway. APS synthesis involves the formation of a high-energy phosphoric-sulfuric acid anhydride bond driven by GTP hydrolysis by CysN coupled to ATP hydrolysis by CysD. The polypeptide is Sulfate adenylyltransferase subunit 1 (Vibrio vulnificus (strain CMCP6)).